Here is a 954-residue protein sequence, read N- to C-terminus: Valine--tRNA ligase (954 aa).

The short motif at 48–58 (PNVTGSLHMGH) is the 'HIGH' region element. The short motif at 560 to 564 (KMSKS) is the 'KMSKS' region element. Lys563 contributes to the ATP binding site. A coiled-coil region spans residues 883 to 953 (AGFINKEAEL…IQEQYKAIEA (71 aa)).

Belongs to the class-I aminoacyl-tRNA synthetase family. ValS type 1 subfamily. As to quaternary structure, monomer.

The protein resides in the cytoplasm. The catalysed reaction is tRNA(Val) + L-valine + ATP = L-valyl-tRNA(Val) + AMP + diphosphate. In terms of biological role, catalyzes the attachment of valine to tRNA(Val). As ValRS can inadvertently accommodate and process structurally similar amino acids such as threonine, to avoid such errors, it has a 'posttransfer' editing activity that hydrolyzes mischarged Thr-tRNA(Val) in a tRNA-dependent manner. The chain is Valine--tRNA ligase from Haemophilus influenzae (strain 86-028NP).